A 913-amino-acid chain; its full sequence is Tyrosine-protein phosphatase non-receptor type 3 (913 aa).

The FERM domain occupies 29 to 312; sequence VICSIRFLDG…EHHSFFQAKK (284 aa). Phosphoserine occurs at positions 357, 359, and 367. Disordered stretches follow at residues 364-400 and 417-473; these read ETKSLPSRSPPITPNWRSPRLRHEIRKPRHSSADNLA and KGPL…PDGV. T376 is modified (phosphothreonine). At S381 the chain carries Phosphoserine. The span at 382–393 shows a compositional bias: basic residues; that stretch reads PRLRHEIRKPRH. S425 bears the Phosphoserine mark. Residues 441 to 453 show a composition bias toward polar residues; sequence SENNPAQSCLTQK. Over residues 454–470 the composition is skewed to low complexity; the sequence is SSSSVSPSSNAPGSCSP. A PDZ domain is found at 510 to 582; that stretch reads LIRITPDEEG…DQVVMFIKAS (73 aa). Positions 646–901 constitute a Tyrosine-protein phosphatase domain; the sequence is VLIQFEQLYR…KFVCEAILRV (256 aa). Residues D811, 842–848, and Q886 contribute to the substrate site; that span reads CSAGIGR. C842 acts as the Phosphocysteine intermediate in catalysis.

The protein belongs to the protein-tyrosine phosphatase family. Non-receptor class subfamily.

The protein resides in the cell membrane. Its subcellular location is the cytoplasm. The protein localises to the cytoskeleton. It catalyses the reaction O-phospho-L-tyrosyl-[protein] + H2O = L-tyrosyl-[protein] + phosphate. Its function is as follows. May act at junctions between the membrane and the cytoskeleton. This chain is Tyrosine-protein phosphatase non-receptor type 3 (Ptpn3), found in Mus musculus (Mouse).